The primary structure comprises 560 residues: Oxygen-dependent choline dehydrogenase 1 (560 aa).

8-37 (DYIIIGAGSAGNVLATRLTEDPDVQVLLLE) provides a ligand contact to FAD. Catalysis depends on H475, which acts as the Proton acceptor.

Belongs to the GMC oxidoreductase family. FAD is required as a cofactor.

The enzyme catalyses choline + A = betaine aldehyde + AH2. It catalyses the reaction betaine aldehyde + NAD(+) + H2O = glycine betaine + NADH + 2 H(+). Its pathway is amine and polyamine biosynthesis; betaine biosynthesis via choline pathway; betaine aldehyde from choline (cytochrome c reductase route): step 1/1. Functionally, involved in the biosynthesis of the osmoprotectant glycine betaine. Catalyzes the oxidation of choline to betaine aldehyde and betaine aldehyde to glycine betaine at the same rate. The sequence is that of Oxygen-dependent choline dehydrogenase 1 from Chromohalobacter salexigens (strain ATCC BAA-138 / DSM 3043 / CIP 106854 / NCIMB 13768 / 1H11).